A 216-amino-acid polypeptide reads, in one-letter code: Ras-related protein Rab-5C (216 aa).

Residues S30, A31, G33, K34, S35, S36, H47, E48, T53, and G79 each contribute to the GTP site. S35 contacts Mg(2+). 2 consecutive short sequence motifs (switch) follow at residues 45 to 57 (QFHE…IGAA) and 78 to 94 (AGQE…YRGA). Position 53 (T53) interacts with Mg(2+). S85 is modified (phosphoserine; by LRRK2). GTP-binding residues include N134, K135, D137, A165, and K166. The segment at 185 to 216 (NEPQNATGAPGRNRGVDLQENNPASRSQCCSN) is disordered. The span at 203 to 216 (QENNPASRSQCCSN) shows a compositional bias: polar residues. 2 S-geranylgeranyl cysteine lipidation sites follow: C213 and C214.

It belongs to the small GTPase superfamily. Rab family. As to quaternary structure, interacts with EEA1. Interacts with INCA1. Interacts with GDI1, GDI2, CHML and CHM; phosphorylation at Ser-85 disrupts this interaction. Mg(2+) serves as cofactor. Phosphorylation of Ser-85 in the switch II region by LRRK2 prevents the association of RAB regulatory proteins, including CHM, CHML and RAB GDP dissociation inhibitors GDI1 and GDI2. In terms of processing, (Microbial infection) Glycosylated on arginine residues by S.typhimurium protein Ssek3.

It is found in the cell membrane. The protein localises to the early endosome membrane. It localises to the melanosome. It catalyses the reaction GTP + H2O = GDP + phosphate + H(+). Its activity is regulated as follows. Regulated by guanine nucleotide exchange factors (GEFs) which promote the exchange of bound GDP for free GTP. Regulated by GTPase activating proteins (GAPs) which increase the GTP hydrolysis activity. Inhibited by GDP dissociation inhibitors (GDIs). Functionally, the small GTPases Rab are key regulators of intracellular membrane trafficking, from the formation of transport vesicles to their fusion with membranes. Rabs cycle between an inactive GDP-bound form and an active GTP-bound form that is able to recruit to membranes different sets of downstream effectors directly responsible for vesicle formation, movement, tethering and fusion. The protein is Ras-related protein Rab-5C of Homo sapiens (Human).